Consider the following 402-residue polypeptide: 2,3-bisphosphoglycerate-independent phosphoglycerate mutase (402 aa).

Residues 155 to 174 (SMVSDSDPHRENERPMEVRP) are disordered. The span at 160–174 (SDPHRENERPMEVRP) shows a compositional bias: basic and acidic residues.

The protein belongs to the BPG-independent phosphoglycerate mutase family. A-PGAM subfamily.

The enzyme catalyses (2R)-2-phosphoglycerate = (2R)-3-phosphoglycerate. It functions in the pathway carbohydrate degradation; glycolysis; pyruvate from D-glyceraldehyde 3-phosphate: step 3/5. Catalyzes the interconversion of 2-phosphoglycerate and 3-phosphoglycerate. In Picrophilus torridus (strain ATCC 700027 / DSM 9790 / JCM 10055 / NBRC 100828 / KAW 2/3), this protein is 2,3-bisphosphoglycerate-independent phosphoglycerate mutase.